The chain runs to 207 residues: uncharacterized protein (207 aa).

It to M.leprae ML1660.

This is an uncharacterized protein from Mycobacterium tuberculosis (strain CDC 1551 / Oshkosh).